The sequence spans 301 residues: Putative S-adenosyl-L-methionine-dependent methyltransferase MAP_3777 (301 aa).

Residues D126 and 155 to 156 each bind S-adenosyl-L-methionine; that span reads DL.

The protein belongs to the UPF0677 family.

Its function is as follows. Exhibits S-adenosyl-L-methionine-dependent methyltransferase activity. This chain is Putative S-adenosyl-L-methionine-dependent methyltransferase MAP_3777, found in Mycolicibacterium paratuberculosis (strain ATCC BAA-968 / K-10) (Mycobacterium paratuberculosis).